We begin with the raw amino-acid sequence, 103 residues long: Small ribosomal subunit protein uS10 (103 aa).

The protein belongs to the universal ribosomal protein uS10 family. Part of the 30S ribosomal subunit.

Involved in the binding of tRNA to the ribosomes. In Haemophilus ducreyi (strain 35000HP / ATCC 700724), this protein is Small ribosomal subunit protein uS10.